A 144-amino-acid chain; its full sequence is L-fucose mutarotase (144 aa).

The active-site Proton donor is the His22. Residues Asp30, Arg109, and 131–133 (YGN) each bind substrate.

It belongs to the RbsD / FucU family. FucU mutarotase subfamily. Homodecamer.

It localises to the cytoplasm. The enzyme catalyses alpha-L-fucose = beta-L-fucose. Its pathway is carbohydrate metabolism; L-fucose metabolism. Its function is as follows. Involved in the anomeric conversion of L-fucose. The chain is L-fucose mutarotase from Histophilus somni (strain 129Pt) (Haemophilus somnus).